The chain runs to 507 residues: Maturase K (507 aa).

This sequence belongs to the intron maturase 2 family. MatK subfamily.

It is found in the plastid. The protein localises to the chloroplast. Functionally, usually encoded in the trnK tRNA gene intron. Probably assists in splicing its own and other chloroplast group II introns. This Lyonia ferruginea (Rusty staggerbush) protein is Maturase K.